A 740-amino-acid polypeptide reads, in one-letter code: Autotransporter adhesin BtaE (740 aa).

Positions 1 to 11 are cleaved as a signal peptide; that stretch reads MFGLSVNHAYA. The interval 12–647 is surface exposed passenger domain; the sequence is GPGIFINDGT…LQTLDQANAY (636 aa). Residues 648-686 are outer membrane translocation of the passenger domain; the sequence is TDKKFGKLNEDIVATRIEARQAAAIGLAAASLRYDDRPG. 4 consecutive transmembrane segments (beta stranded) span residues 686–696, 700–710, 719–725, and 728–739; these read GKISAAIGGGF, EGAVALGLGHT, NLSAATS, and NWGMGAGFSYTF. Positions 687-740 are translocator domain; the sequence is KISAAIGGGFWRGEGAVALGLGHTSEDQRMRSNLSAATSGGNWGMGAGFSYTFN.

It belongs to the autotransporter-2 (AT-2) (TC 1.B.40) family. In terms of assembly, homotrimer.

The protein localises to the cell surface. Its subcellular location is the cell outer membrane. In terms of biological role, binds to hyaluronic acid and epithelial cells, and is required for full virulence in the mouse model. This Brucella suis biovar 1 (strain 1330) protein is Autotransporter adhesin BtaE.